The primary structure comprises 305 residues: Peroxisome biogenesis factor 2 (305 aa).

Residues Met-1–Leu-15 are Peroxisomal matrix-facing. Residues Arg-16–His-42 form a helical membrane-spanning segment. The Cytoplasmic segment spans residues Gly-43–Leu-48. A helical transmembrane segment spans residues Leu-49 to Ala-74. The Peroxisomal matrix segment spans residues Thr-75–Pro-98. A helical transmembrane segment spans residues Ser-99 to Arg-125. The Cytoplasmic segment spans residues Asn-126–Gly-133. A helical membrane pass occupies residues Lys-134–Lys-160. Residues Gly-161–Gly-187 are Peroxisomal matrix-facing. The chain crosses the membrane as a helical span at residues Phe-188 to Ile-211. Over Asn-212–Leu-305 the chain is Cytoplasmic. Cys-244, Cys-247, Cys-259, His-261, Cys-264, Cys-267, Cys-280, and Cys-283 together coordinate Zn(2+). The RING-type zinc finger occupies Cys-244–Gly-284.

Belongs to the pex2/pex10/pex12 family. As to quaternary structure, component of the PEX2-PEX10-PEX12 retrotranslocation channel, composed of PEX2, PEX10 and PEX12. Forms intramolecular and intermolecular disulfide bonds in response to reactive oxygen species (ROS), promoting higher stability.

It localises to the peroxisome membrane. It carries out the reaction [E2 ubiquitin-conjugating enzyme]-S-ubiquitinyl-L-cysteine + [acceptor protein]-L-cysteine = [E2 ubiquitin-conjugating enzyme]-L-cysteine + [acceptor protein]-S-ubiquitinyl-L-cysteine.. It catalyses the reaction S-ubiquitinyl-[E2 ubiquitin-conjugating enzyme]-L-cysteine + [acceptor protein]-L-lysine = [E2 ubiquitin-conjugating enzyme]-L-cysteine + N(6)-ubiquitinyl-[acceptor protein]-L-lysine.. It participates in protein modification; protein ubiquitination. Functionally, E3 ubiquitin-protein ligase component of a retrotranslocation channel required for peroxisome organization by mediating export of the PEX5 receptor from peroxisomes to the cytosol, thereby promoting PEX5 recycling. The retrotranslocation channel is composed of PEX2, PEX10 and PEX12; each subunit contributing transmembrane segments that coassemble into an open channel that specifically allows the passage of PEX5 through the peroxisomal membrane. PEX2 also regulates peroxisome organization by acting as a E3 ubiquitin-protein ligase. PEX2 ubiquitinates PEX5 during its passage through the retrotranslocation channel: catalyzes monoubiquitination of PEX5 at 'Cys-11', a modification that acts as a signal for PEX5 extraction into the cytosol. Required for pexophagy in response to starvation by mediating ubiquitination of peroxisomal proteins, such as PEX5 and ABCD3/PMP70. Also involved in the response to reactive oxygen species (ROS) by mediating 'Lys-48'-linked polyubiquitination and subsequent degradation of PNPLA2/ATGL, thereby regulating lipolysis. The chain is Peroxisome biogenesis factor 2 (Pex2) from Rattus norvegicus (Rat).